Reading from the N-terminus, the 102-residue chain is Small ribosomal subunit protein uS10 (102 aa).

Belongs to the universal ribosomal protein uS10 family. As to quaternary structure, part of the 30S ribosomal subunit.

Its function is as follows. Involved in the binding of tRNA to the ribosomes. This Methanothermobacter thermautotrophicus (strain ATCC 29096 / DSM 1053 / JCM 10044 / NBRC 100330 / Delta H) (Methanobacterium thermoautotrophicum) protein is Small ribosomal subunit protein uS10.